The sequence spans 241 residues: RxLR effector protein SFI5 (241 aa).

An N-terminal signal peptide occupies residues 1 to 20 (MLRQARPLVVLIAVTFLVAS). A RxLR-dEER motif is present at residues 44 to 62 (RLLRTHHATIKVNADSEER).

Belongs to the RxLR effector family.

The protein localises to the secreted. It is found in the host cell membrane. Functionally, effector that suppresses flg22-induced post-translational MAP kinase activation in tomato but not in Arabidopsis. The perception of highly conserved pathogen- or microbe-associated molecular patterns (PAMPs/MAMPs), such as flg22, triggers converging signaling pathways recruiting MAP kinase cascades and inducing transcriptional re-programming, yielding a generic antimicrobial response. This chain is RxLR effector protein SFI5, found in Phytophthora infestans (strain T30-4) (Potato late blight agent).